Consider the following 375-residue polypeptide: Probable pectin lyase B (375 aa).

Positions 1-19 (MKYAAFLPTIGALVSQAIA) are cleaved as a signal peptide. 2 disulfide bridges follow: C82–C101 and C91–C225. N128 carries an N-linked (GlcNAc...) asparagine glycan. R255 is a catalytic residue. An intrachain disulfide couples C321 to C329.

The protein belongs to the polysaccharide lyase 1 family.

It is found in the secreted. It carries out the reaction Eliminative cleavage of (1-&gt;4)-alpha-D-galacturonan methyl ester to give oligosaccharides with 4-deoxy-6-O-methyl-alpha-D-galact-4-enuronosyl groups at their non-reducing ends.. In terms of biological role, pectinolytic enzymes consist of four classes of enzymes: pectin lyase, polygalacturonase, pectin methylesterase and rhamnogalacturonase. Among pectinolytic enzymes, pectin lyase is the most important in depolymerization of pectin, since it cleaves internal glycosidic bonds of highly methylated pectins. This Aspergillus fumigatus (strain CBS 144.89 / FGSC A1163 / CEA10) (Neosartorya fumigata) protein is Probable pectin lyase B (pelB).